A 460-amino-acid chain; its full sequence is Trigger factor (460 aa).

A PPIase FKBP-type domain is found at 166–245; that stretch reads DDFLTIDITA…VKAVKERELP (80 aa). Positions 434–460 are disordered; that stretch reads AAEEAAAGEANEEADVVASDDPAAVKF. The segment covering 449 to 460 has biased composition (low complexity); the sequence is VVASDDPAAVKF.

It belongs to the FKBP-type PPIase family. Tig subfamily.

Its subcellular location is the cytoplasm. The enzyme catalyses [protein]-peptidylproline (omega=180) = [protein]-peptidylproline (omega=0). Functionally, involved in protein export. Acts as a chaperone by maintaining the newly synthesized protein in an open conformation. Functions as a peptidyl-prolyl cis-trans isomerase. The chain is Trigger factor from Paenarthrobacter aurescens (strain TC1).